We begin with the raw amino-acid sequence, 209 residues long: NAD(P)H-quinone oxidoreductase subunit K 2 (209 aa).

Positions 53, 54, 118, and 149 each coordinate [4Fe-4S] cluster.

The protein belongs to the complex I 20 kDa subunit family. NDH-1 can be composed of about 15 different subunits; different subcomplexes with different compositions have been identified which probably have different functions. It depends on [4Fe-4S] cluster as a cofactor.

It is found in the cellular thylakoid membrane. The enzyme catalyses a plastoquinone + NADH + (n+1) H(+)(in) = a plastoquinol + NAD(+) + n H(+)(out). It carries out the reaction a plastoquinone + NADPH + (n+1) H(+)(in) = a plastoquinol + NADP(+) + n H(+)(out). In terms of biological role, NDH-1 shuttles electrons from an unknown electron donor, via FMN and iron-sulfur (Fe-S) centers, to quinones in the respiratory and/or the photosynthetic chain. The immediate electron acceptor for the enzyme in this species is believed to be plastoquinone. Couples the redox reaction to proton translocation, and thus conserves the redox energy in a proton gradient. Cyanobacterial NDH-1 also plays a role in inorganic carbon-concentration. The chain is NAD(P)H-quinone oxidoreductase subunit K 2 from Acaryochloris marina (strain MBIC 11017).